Reading from the N-terminus, the 125-residue chain is Small ribosomal subunit protein uS13 (125 aa).

It belongs to the universal ribosomal protein uS13 family. In terms of assembly, part of the 30S ribosomal subunit. Forms a loose heterodimer with protein S19. Forms two bridges to the 50S subunit in the 70S ribosome.

Functionally, located at the top of the head of the 30S subunit, it contacts several helices of the 16S rRNA. In the 70S ribosome it contacts the 23S rRNA (bridge B1a) and protein L5 of the 50S subunit (bridge B1b), connecting the 2 subunits; these bridges are implicated in subunit movement. Contacts the tRNAs in the A and P-sites. This Rickettsia massiliae (strain Mtu5) protein is Small ribosomal subunit protein uS13.